A 364-amino-acid polypeptide reads, in one-letter code: Putative serine/threonine-protein phosphatase C06A1.3 (364 aa).

Residues 1-24 form a disordered region; it reads MSTDGNNNKKGSKEGPKSSEISKF. The segment covering 11–24 has biased composition (basic and acidic residues); it reads GSKEGPKSSEISKF. Positions 93, 95, 121, and 153 each coordinate Mn(2+). His-154 serves as the catalytic Proton donor. Positions 202 and 277 each coordinate Mn(2+).

The protein belongs to the PPP phosphatase family. PP-1 subfamily. Mn(2+) is required as a cofactor.

It catalyses the reaction O-phospho-L-seryl-[protein] + H2O = L-seryl-[protein] + phosphate. The enzyme catalyses O-phospho-L-threonyl-[protein] + H2O = L-threonyl-[protein] + phosphate. This is Putative serine/threonine-protein phosphatase C06A1.3 from Caenorhabditis elegans.